A 475-amino-acid polypeptide reads, in one-letter code: UDP-N-acetylmuramate--L-alanine ligase (475 aa).

Residue 118–124 participates in ATP binding; the sequence is GTHGKTT.

The protein belongs to the MurCDEF family.

The protein localises to the cytoplasm. It carries out the reaction UDP-N-acetyl-alpha-D-muramate + L-alanine + ATP = UDP-N-acetyl-alpha-D-muramoyl-L-alanine + ADP + phosphate + H(+). It functions in the pathway cell wall biogenesis; peptidoglycan biosynthesis. Functionally, cell wall formation. This chain is UDP-N-acetylmuramate--L-alanine ligase, found in Paracoccus denitrificans (strain Pd 1222).